The following is a 99-amino-acid chain: Large ribosomal subunit protein eL21 (99 aa).

The protein belongs to the eukaryotic ribosomal protein eL21 family.

This chain is Large ribosomal subunit protein eL21, found in Pyrobaculum calidifontis (strain DSM 21063 / JCM 11548 / VA1).